The sequence spans 246 residues: tRNA pseudouridine synthase A (246 aa).

Residue D52 is the Nucleophile of the active site. Y112 is a substrate binding site.

Belongs to the tRNA pseudouridine synthase TruA family. In terms of assembly, homodimer.

It catalyses the reaction uridine(38/39/40) in tRNA = pseudouridine(38/39/40) in tRNA. Functionally, formation of pseudouridine at positions 38, 39 and 40 in the anticodon stem and loop of transfer RNAs. The protein is tRNA pseudouridine synthase A of Pelagibacter ubique (strain HTCC1062).